Consider the following 39-residue polypeptide: Photosystem II reaction center protein L (39 aa).

The chain crosses the membrane as a helical span at residues 18–38 (SLYLGLLLVFVTAVLFTSYFF).

The protein belongs to the PsbL family. As to quaternary structure, PSII is composed of 1 copy each of membrane proteins PsbA, PsbB, PsbC, PsbD, PsbE, PsbF, PsbH, PsbI, PsbJ, PsbK, PsbL, PsbM, PsbT, PsbX, PsbY, Psb30/Ycf12, peripheral proteins PsbO, CyanoQ (PsbQ), PsbU, PsbV and a large number of cofactors. It forms dimeric complexes.

Its subcellular location is the cellular thylakoid membrane. One of the components of the core complex of photosystem II (PSII). PSII is a light-driven water:plastoquinone oxidoreductase that uses light energy to abstract electrons from H(2)O, generating O(2) and a proton gradient subsequently used for ATP formation. It consists of a core antenna complex that captures photons, and an electron transfer chain that converts photonic excitation into a charge separation. This subunit is found at the monomer-monomer interface and is required for correct PSII assembly and/or dimerization. The protein is Photosystem II reaction center protein L of Prochlorococcus marinus (strain MIT 9313).